The primary structure comprises 1154 residues: Nitric oxide synthase, inducible (1154 aa).

The segment at 22–58 is disordered; that stretch reads KDINNNVEKPPGATPSPSTQDDLKNHKHHNDSPQPLT. Positions 23 to 27 match the DINNN-motif; mediates interaction with SPSB1, SPSB2 and SPSB4 motif; the sequence is DINNN. 2 residues coordinate Zn(2+): Cys107 and Cys112. Cys197 is a heme b binding site. 4 residues coordinate L-arginine: Gln260, Trp369, Tyr370, and Glu374. 4 residues coordinate (6R)-L-erythro-5,6,7,8-tetrahydrobiopterin: Arg378, Ile459, Trp460, and Phe473. Tyr488 serves as a coordination point for heme b. Residues 512–532 form a calmodulin-binding region; it reads LKVLVKAVLFASMLMRKTMAS. One can recognise a Flavodoxin-like domain in the interval 536 to 674; it reads VTILFATETG…AFRCWAVQTF (139 aa). FMN-binding residues include Thr542, Glu543, Thr544, Lys546, and Ser547. At Tyr572 the chain carries Phosphotyrosine. Positions 588, 589, 625, 632, and 658 each coordinate FMN. The FAD-binding FR-type domain occupies 727–967; sequence KNVFTLRLKS…VRSAGNFKLP (241 aa). Arg747 serves as a coordination point for NADP(+). Residues His769, Arg903, Tyr905, Ser906, Thr921, Ala923, Tyr927, Val940, Cys941, and Ser942 each coordinate FAD. The NADP(+) site is built by Thr981, Arg1014, Ser1043, Arg1044, Lys1050, Tyr1052, Gln1054, and Asp1087.

Belongs to the NOS family. As to quaternary structure, homodimer. Interacts with NHERF1. Interacts with GAPDH; induced by oxidatively-modified low-densitity lipoprotein (LDL(ox)). Interacts with S100A8 and S100A9 to form the iNOS-S100A8/9 transnitrosylase complex. Interacts with SPSB1, SPSB2 and SPSB4. Interacts with ELOC and CUL5 in the presence of SPSB1 or SPSB2 or SPSB4. Forms a complex with ASL, ASS1 and HSP90AA1; the complex regulates cell-autonomous L-arginine synthesis and citrulline recycling while channeling extracellular L-arginine to nitric oxide synthesis pathway. The cofactor is heme b. It depends on FAD as a cofactor. FMN serves as cofactor. Requires (6R)-L-erythro-5,6,7,8-tetrahydrobiopterin as cofactor. Polyubiquitinated; mediated by SPSB1, SPSB2 and SPSB4, leading to proteasomal degradation.

It localises to the cytoplasm. It is found in the cytosol. It carries out the reaction 2 L-arginine + 3 NADPH + 4 O2 + H(+) = 2 L-citrulline + 2 nitric oxide + 3 NADP(+) + 4 H2O. With respect to regulation, regulated by calcium/calmodulin. Produces nitric oxide (NO) which is a messenger molecule with diverse functions throughout the body. In macrophages, NO mediates tumoricidal and bactericidal actions. Also has nitrosylase activity and mediates cysteine S-nitrosylation of cytoplasmic target proteins such PTGS2/COX2. As component of the iNOS-S100A8/9 transnitrosylase complex involved in the selective inflammatory stimulus-dependent S-nitrosylation of GAPDH implicated in regulation of the GAIT complex activity and probably multiple targets including ANXA5, EZR, MSN and VIM. Involved in inflammation, enhances the synthesis of pro-inflammatory mediators such as IL6 and IL8. The chain is Nitric oxide synthase, inducible (NOS2) from Canis lupus familiaris (Dog).